A 483-amino-acid chain; its full sequence is Membrane-bound lytic murein transglycosylase F (483 aa).

An N-terminal signal peptide occupies residues 1–18 (MKGLVIRISVALALLLWA). Residues 19–270 (VDMVFPWQQI…RIEEKYFSHI (252 aa)) form a non-LT domain region. Residues 272–483 (QFDYVDIKSY…IMITPQNSQD (212 aa)) form an LT domain region. Residue Glu315 is part of the active site.

This sequence in the N-terminal section; belongs to the bacterial solute-binding protein 3 family. The protein in the C-terminal section; belongs to the transglycosylase Slt family.

It localises to the cell outer membrane. The catalysed reaction is Exolytic cleavage of the (1-&gt;4)-beta-glycosidic linkage between N-acetylmuramic acid (MurNAc) and N-acetylglucosamine (GlcNAc) residues in peptidoglycan, from either the reducing or the non-reducing ends of the peptidoglycan chains, with concomitant formation of a 1,6-anhydrobond in the MurNAc residue.. Its function is as follows. Murein-degrading enzyme that degrades murein glycan strands and insoluble, high-molecular weight murein sacculi, with the concomitant formation of a 1,6-anhydromuramoyl product. Lytic transglycosylases (LTs) play an integral role in the metabolism of the peptidoglycan (PG) sacculus. Their lytic action creates space within the PG sacculus to allow for its expansion as well as for the insertion of various structures such as secretion systems and flagella. This is Membrane-bound lytic murein transglycosylase F from Actinobacillus succinogenes (strain ATCC 55618 / DSM 22257 / CCUG 43843 / 130Z).